We begin with the raw amino-acid sequence, 567 residues long: Berberine bridge enzyme-like D-1 (567 aa).

An N-terminal signal peptide occupies residues 1–33; that stretch reads MKRNISMFLQLLLIILMMISFLFTSLLVPSVSA. Cysteine 42 and cysteine 103 are joined by a disulfide. Asparagine 50 carries N-linked (GlcNAc...) asparagine glycosylation. Residues 81–257 enclose the FAD-binding PCMH-type domain; the sequence is SKPKPTVIIV…YAWKIRLLKV (177 aa). Histidine 118 is subject to Pros-8alpha-FAD histidine. 2 N-linked (GlcNAc...) asparagine glycosylation sites follow: asparagine 364 and asparagine 378.

This sequence belongs to the oxygen-dependent FAD-linked oxidoreductase family. Requires FAD as cofactor. In terms of tissue distribution, mostly expressed in roots at low levels.

Its subcellular location is the vacuole. It participates in alkaloid biosynthesis; nicotine biosynthesis. Functionally, involved in the biosynthesis of pyridine alkaloid natural products, leading mainly to the production of anabasine, anatabine, nicotine and nornicotine, effective deterrents against herbivores with antiparasitic and pesticide properties (neurotoxins); nornicotine serves as the precursor in the synthesis of the carcinogen compound N'-nitrosonornicotine (NNN). Catalyzes a late oxidation step subsequent to the pyridine ring condensation reaction in the biosynthesis of alkaloids. The sequence is that of Berberine bridge enzyme-like D-1 from Nicotiana tabacum (Common tobacco).